The chain runs to 100 residues: uncharacterized protein (100 aa).

To M.jannaschii MJ1155.1.

This is an uncharacterized protein from Archaeoglobus fulgidus (strain ATCC 49558 / DSM 4304 / JCM 9628 / NBRC 100126 / VC-16).